The following is a 683-amino-acid chain: Boron transporter 4 (683 aa).

The Cytoplasmic portion of the chain corresponds to 1–38; it reads MEEERVDSSKRLFRGIVADLRGRALCYKEDWVAGLRSG. Residues 39–59 form a helical membrane-spanning segment; it reads FGILAPTTYIFFASALPVIAF. Over 60-80 the chain is Extracellular; it reads GEQLSRDTEGALSTVETLAST. A helical transmembrane segment spans residues 81–101; sequence ALCGVIHSILGGQPLLILGVA. Residues 102-126 lie on the Cytoplasmic side of the membrane; that stretch reads EPTVLMYVYLYNFAIGRPELGKQLY. Residues 127-147 form a helical membrane-spanning segment; the sequence is LAWAAWVCVWTALLLFVMAIL. The Extracellular portion of the chain corresponds to 148–160; it reads NTADIINRFTRVA. A helical transmembrane segment spans residues 161–181; that stretch reads GELFGMLISVLFIQQAIKGMV. Topologically, residues 182-200 are cytoplasmic; it reads SEFGMPKDEDSKLEKYKFE. Residues 201 to 221 traverse the membrane as a helical segment; the sequence is WLYTNGLLGLIFTFGLLYTAL. At 222–238 the chain is on the extracellular side; it reads KSRKARSWRYGTGWYRS. A helical transmembrane segment spans residues 239–259; it reads FIADYGVPLMVVVWTALSFST. The Cytoplasmic portion of the chain corresponds to 260–294; it reads PSKLPSGVPRRLFSPLPWDSPSLSHWTVIKDMGKV. The helical transmembrane segment at 295 to 315 threads the bilayer; that stretch reads SPGYIFAAFIPALMIAGLYFF. Residues 316–335 lie on the Extracellular side of the membrane; that stretch reads DHSVASQLAQQKEFNLKKPS. The chain crosses the membrane as a helical span at residues 336-356; it reads AYHYDILLLGFMTLICGLLGL. Residues 357–477 lie on the Cytoplasmic side of the membrane; it reads PPSNGVLPQS…EQRVSNLLQS (121 aa). Residues 478–498 traverse the membrane as a helical segment; it reads LLVAGAVLAMPAIKLIPTSIL. At 499–565 the chain is on the extracellular side; the sequence is WGYFAYMAID…QIFYFGLCYG (67 aa). The chain crosses the membrane as a helical span at residues 566–586; that stretch reads VTWIPVAGIMFPVPFFLLIAI. The Cytoplasmic portion of the chain corresponds to 587-683; sequence RQYILPKLFN…GDGDMSTTRE (97 aa). Disordered regions lie at residues 617–638 and 661–683; these read NPLELSFRSNDSKRGVQEGDAE and KGNQIYPKEKVKAGDGDMSTTRE.

Belongs to the anion exchanger (TC 2.A.31.3) family. Expressed in the distal sides of epidermal cells in the elongation zone of roots.

It localises to the membrane. Functionally, efflux-type boron transporter polarly localized in roots. Boron is essential for maintaining the integrity of plants cell walls. In Arabidopsis thaliana (Mouse-ear cress), this protein is Boron transporter 4 (BOR4).